The following is a 119-amino-acid chain: Ribonuclease P protein component (119 aa).

Belongs to the RnpA family. Consists of a catalytic RNA component (M1 or rnpB) and a protein subunit.

It carries out the reaction Endonucleolytic cleavage of RNA, removing 5'-extranucleotides from tRNA precursor.. RNaseP catalyzes the removal of the 5'-leader sequence from pre-tRNA to produce the mature 5'-terminus. It can also cleave other RNA substrates such as 4.5S RNA. The protein component plays an auxiliary but essential role in vivo by binding to the 5'-leader sequence and broadening the substrate specificity of the ribozyme. The protein is Ribonuclease P protein component of Streptococcus gordonii (strain Challis / ATCC 35105 / BCRC 15272 / CH1 / DL1 / V288).